We begin with the raw amino-acid sequence, 220 residues long: Large ribosomal subunit protein bL21 (220 aa).

The tract at residues 109–158 (SKKVAAKPATSEEKAAEEKPAKAKKEAAEKGASPRETKAAPLFSAPEGEP) is disordered. Residues 118–146 (TSEEKAAEEKPAKAKKEAAEKGASPRETK) are compositionally biased toward basic and acidic residues.

The protein belongs to the bacterial ribosomal protein bL21 family. Part of the 50S ribosomal subunit. Contacts protein L20.

In terms of biological role, this protein binds to 23S rRNA in the presence of protein L20. The sequence is that of Large ribosomal subunit protein bL21 from Chelativorans sp. (strain BNC1).